A 233-amino-acid polypeptide reads, in one-letter code: Orotidine 5'-phosphate decarboxylase (233 aa).

Substrate contacts are provided by residues Asp9, Lys31, 58–67 (DLKLHDIPNT), Thr120, Arg182, Gln191, Gly211, and Arg212. Lys60 (proton donor) is an active-site residue.

It belongs to the OMP decarboxylase family. Type 1 subfamily. Homodimer.

The enzyme catalyses orotidine 5'-phosphate + H(+) = UMP + CO2. It participates in pyrimidine metabolism; UMP biosynthesis via de novo pathway; UMP from orotate: step 2/2. Catalyzes the decarboxylation of orotidine 5'-monophosphate (OMP) to uridine 5'-monophosphate (UMP). The protein is Orotidine 5'-phosphate decarboxylase of Listeria monocytogenes serotype 4a (strain HCC23).